The sequence spans 117 residues: Large ribosomal subunit protein uL18 (117 aa).

This sequence belongs to the universal ribosomal protein uL18 family. Part of the 50S ribosomal subunit; part of the 5S rRNA/L5/L18/L25 subcomplex. Contacts the 5S and 23S rRNAs.

Its function is as follows. This is one of the proteins that bind and probably mediate the attachment of the 5S RNA into the large ribosomal subunit, where it forms part of the central protuberance. This chain is Large ribosomal subunit protein uL18, found in Mycoplasma mobile (strain ATCC 43663 / 163K / NCTC 11711) (Mesomycoplasma mobile).